A 341-amino-acid polypeptide reads, in one-letter code: Delta(1)-pyrroline-2-carboxylate/Delta(1)-piperideine-2-carboxylate reductase (341 aa).

Serine 52 serves as the catalytic Charge relay system. The Proton donor role is filled by histidine 53. Arginine 57 contributes to the substrate binding site. An NADP(+)-binding site is contributed by histidine 125–leucine 129. Threonine 165 lines the substrate pocket. Aspartate 183 to alanine 185 contributes to the NADP(+) binding site. Histidine 191–glycine 192 contributes to the substrate binding site. Residue aspartate 193 is the Charge relay system of the active site. Residues histidine 235–lysine 236 and arginine 308–arginine 314 each bind NADP(+).

Belongs to the LDH2/MDH2 oxidoreductase family. As to quaternary structure, homodimer.

The enzyme catalyses L-pipecolate + NADP(+) = Delta(1)-piperideine-2-carboxylate + NADPH + H(+). It carries out the reaction L-proline + NADP(+) = 1-pyrroline-2-carboxylate + NADPH + H(+). It catalyses the reaction N-methyl-L-alanine + NADP(+) + H2O = methylamine + pyruvate + NADPH + H(+). Is inhibited by the substrate analog pyrrole-2-carboxylate, but not by N-formylphenylalanine. Its function is as follows. Catalyzes the reduction of both Delta(1)-pyrroline-2-carboxylate (Pyr2C) and Delta(1)-piperideine-2-carboxylate (Pip2C) to L-proline and L-pipecolate, respectively, using NADPH as the electron donor. Can use NADH instead of NADPH, although with much less efficiency. Plays an essential role in the catabolism of D-proline and D-lysine, which allows P.putida to grow on each of these amino-acids as a sole carbon source; D-lysine appears to be catabolized only through the pipecolate pathway. Can also catalyze the reverse oxidation reactions, albeit at a much lower rate. To a lesser extent, is able to catalyze in vitro the NADPH-dependent formation of N-alkyl-L-amino acids from the corresponding alpha-oxo acids and alkylamines, e.g. the formation of N-methylalanine from pyruvate and N-methylamine; cannot use ammonia as substrate for these reductive amination reactions. Shows neither malate dehydrogenase nor lactate dehydrogenase activity. The polypeptide is Delta(1)-pyrroline-2-carboxylate/Delta(1)-piperideine-2-carboxylate reductase (Pseudomonas putida (Arthrobacter siderocapsulatus)).